The primary structure comprises 364 residues: Ribosomal RNA large subunit methyltransferase F (364 aa).

The segment at 1–28 (MTNKRKSAKPLEPAKRTPKLRTKKSRDL) is disordered.

It belongs to the methyltransferase superfamily. METTL16/RlmF family.

It localises to the cytoplasm. The enzyme catalyses adenosine(1618) in 23S rRNA + S-adenosyl-L-methionine = N(6)-methyladenosine(1618) in 23S rRNA + S-adenosyl-L-homocysteine + H(+). Its function is as follows. Specifically methylates the adenine in position 1618 of 23S rRNA. The sequence is that of Ribosomal RNA large subunit methyltransferase F from Vibrio vulnificus (strain YJ016).